Here is a 245-residue protein sequence, read N- to C-terminus: tRNA1(Val) (adenine(37)-N6)-methyltransferase (245 aa).

The protein belongs to the methyltransferase superfamily. tRNA (adenine-N(6)-)-methyltransferase family.

Its subcellular location is the cytoplasm. The enzyme catalyses adenosine(37) in tRNA1(Val) + S-adenosyl-L-methionine = N(6)-methyladenosine(37) in tRNA1(Val) + S-adenosyl-L-homocysteine + H(+). Its function is as follows. Specifically methylates the adenine in position 37 of tRNA(1)(Val) (anticodon cmo5UAC). In Klebsiella pneumoniae (strain 342), this protein is tRNA1(Val) (adenine(37)-N6)-methyltransferase.